The following is an 823-amino-acid chain: Nuclear pore complex protein Nup93-1 (823 aa).

The protein belongs to the nucleoporin interacting component (NIC) family. In terms of assembly, part of the nuclear pore complex (NPC). Interacts with msk (via C-terminus); this association might be facilitated by Nup75. Interacts with Mad (preferentially when phosphorylated). Interacts with Nup154 (via N-terminus). Interacts with the Polycomb group (PcG) proteins Pc and E(z).

It is found in the nucleus membrane. The protein resides in the nucleus. It localises to the nuclear pore complex. Its subcellular location is the nucleoplasm. Its function is as follows. Required for nuclear pore complex assembly, maintenance and function. Required for nuclear import of phosphorylated Mad via importin msk. Has no role in classical nuclear localization signal (cNLS)-dependent nuclear import via importin-beta. Mediates the association between the nuclear pore complex and a subclass of silenced regions bound by Polycomb group (PcG) proteins, enables long-range interactions between Polycomb loci and contributes to repression of polycomb targets. Together with Nup62 and Nup154, contributes to karyosome morphology and chromatin organization including attachment to the nuclear envelope in oocytes and nurse cells. The polypeptide is Nuclear pore complex protein Nup93-1 (Drosophila melanogaster (Fruit fly)).